A 359-amino-acid chain; its full sequence is DNA polymerase IV (359 aa).

A UmuC domain is found at 4–185 (IIHIDMDCYF…LSLRKIPGVG (182 aa)). Mg(2+)-binding residues include Asp8 and Asp103. Glu104 is an active-site residue.

The protein belongs to the DNA polymerase type-Y family. In terms of assembly, monomer. It depends on Mg(2+) as a cofactor.

Its subcellular location is the cytoplasm. It catalyses the reaction DNA(n) + a 2'-deoxyribonucleoside 5'-triphosphate = DNA(n+1) + diphosphate. Poorly processive, error-prone DNA polymerase involved in untargeted mutagenesis. Copies undamaged DNA at stalled replication forks, which arise in vivo from mismatched or misaligned primer ends. These misaligned primers can be extended by PolIV. Exhibits no 3'-5' exonuclease (proofreading) activity. May be involved in translesional synthesis, in conjunction with the beta clamp from PolIII. The chain is DNA polymerase IV from Shewanella sp. (strain MR-4).